Consider the following 239-residue polypeptide: Small ribosomal subunit protein uS2 (239 aa).

This sequence belongs to the universal ribosomal protein uS2 family.

In Francisella tularensis subsp. tularensis (strain WY96-3418), this protein is Small ribosomal subunit protein uS2.